Consider the following 76-residue polypeptide: uncharacterized protein (76 aa).

In terms of domain architecture, HTH cro/C1-type spans 15 to 69 (VRIVRKEQNLRQDELAGVAGVGLRFIVDLEAGKPTAQIGKVLQVLQTLGCSIDIL). A DNA-binding region (H-T-H motif) is located at residues 26 to 45 (QDELAGVAGVGLRFIVDLEA).

This is an uncharacterized protein from Sinorhizobium fredii (strain NBRC 101917 / NGR234).